The chain runs to 858 residues: Leucine--tRNA ligase (858 aa).

The 'HIGH' region signature appears at 42–52 (PYPSGNLHMGH). The span at 584 to 594 (NPNRSDSSRYI) shows a compositional bias: polar residues. The segment at 584 to 611 (NPNRSDSSRYIPSNLVDPNDPKDPETGE) is disordered. Positions 619–623 (TMSKS) match the 'KMSKS' region motif. An ATP-binding site is contributed by K622.

Belongs to the class-I aminoacyl-tRNA synthetase family.

It is found in the cytoplasm. The enzyme catalyses tRNA(Leu) + L-leucine + ATP = L-leucyl-tRNA(Leu) + AMP + diphosphate. The chain is Leucine--tRNA ligase from Cyanothece sp. (strain PCC 7425 / ATCC 29141).